Reading from the N-terminus, the 301-residue chain is Phosphatidylserine decarboxylase proenzyme (301 aa).

Catalysis depends on charge relay system; for autoendoproteolytic cleavage activity residues Asp115, His171, and Ser258. Ser258 serves as the catalytic Schiff-base intermediate with substrate; via pyruvic acid; for decarboxylase activity. Position 258 is a pyruvic acid (Ser); by autocatalysis (Ser258).

It belongs to the phosphatidylserine decarboxylase family. PSD-B subfamily. Prokaryotic type II sub-subfamily. Heterodimer of a large membrane-associated beta subunit and a small pyruvoyl-containing alpha subunit. Pyruvate is required as a cofactor. Post-translationally, is synthesized initially as an inactive proenzyme. Formation of the active enzyme involves a self-maturation process in which the active site pyruvoyl group is generated from an internal serine residue via an autocatalytic post-translational modification. Two non-identical subunits are generated from the proenzyme in this reaction, and the pyruvate is formed at the N-terminus of the alpha chain, which is derived from the carboxyl end of the proenzyme. The autoendoproteolytic cleavage occurs by a canonical serine protease mechanism, in which the side chain hydroxyl group of the serine supplies its oxygen atom to form the C-terminus of the beta chain, while the remainder of the serine residue undergoes an oxidative deamination to produce ammonia and the pyruvoyl prosthetic group on the alpha chain. During this reaction, the Ser that is part of the protease active site of the proenzyme becomes the pyruvoyl prosthetic group, which constitutes an essential element of the active site of the mature decarboxylase.

It is found in the cell membrane. The enzyme catalyses a 1,2-diacyl-sn-glycero-3-phospho-L-serine + H(+) = a 1,2-diacyl-sn-glycero-3-phosphoethanolamine + CO2. The protein operates within phospholipid metabolism; phosphatidylethanolamine biosynthesis; phosphatidylethanolamine from CDP-diacylglycerol: step 2/2. Catalyzes the formation of phosphatidylethanolamine (PtdEtn) from phosphatidylserine (PtdSer). In Chlamydia pneumoniae (Chlamydophila pneumoniae), this protein is Phosphatidylserine decarboxylase proenzyme.